Consider the following 234-residue polypeptide: DNA repair protein RecO (234 aa).

It belongs to the RecO family.

Its function is as follows. Involved in DNA repair and RecF pathway recombination. This is DNA repair protein RecO from Hamiltonella defensa subsp. Acyrthosiphon pisum (strain 5AT).